The chain runs to 345 residues: Phosphoribosylformylglycinamidine cyclo-ligase (345 aa).

Belongs to the AIR synthase family.

It localises to the cytoplasm. It catalyses the reaction 2-formamido-N(1)-(5-O-phospho-beta-D-ribosyl)acetamidine + ATP = 5-amino-1-(5-phospho-beta-D-ribosyl)imidazole + ADP + phosphate + H(+). It participates in purine metabolism; IMP biosynthesis via de novo pathway; 5-amino-1-(5-phospho-D-ribosyl)imidazole from N(2)-formyl-N(1)-(5-phospho-D-ribosyl)glycinamide: step 2/2. This chain is Phosphoribosylformylglycinamidine cyclo-ligase, found in Anaeromyxobacter dehalogenans (strain 2CP-C).